We begin with the raw amino-acid sequence, 251 residues long: MKTALLLKTKSQPFDPYVEAFEKYGRDTAFIPVLRHKRVHEEQLRDKLKNVRKTYCGLIVTSQRVSETLDEALKQEDETERQKILMETPIFTVGPATDDSIRRLGFQQTHGKDCGRGEVLADLIEEWYTTTKQHKPLLFLVGEKHRDIIQRKLGDDRVDSLIVYATQELENTETQIKDTIRKHPTIDWIVAFSPTSICSLLNTFELKIATIGPTTGDYLKKLGTQPNVVSPAPNPESLASSIVAFDEENSS.

Positions 231–251 (PAPNPESLASSIVAFDEENSS) are disordered.

The protein belongs to the uroporphyrinogen-III synthase family.

The enzyme catalyses hydroxymethylbilane = uroporphyrinogen III + H2O. The protein operates within porphyrin-containing compound metabolism; protoporphyrin-IX biosynthesis; coproporphyrinogen-III from 5-aminolevulinate: step 3/4. Its function is as follows. Catalyzes cyclization of the linear tetrapyrrole, hydroxymethylbilane, to the macrocyclic uroporphyrinogen III. This chain is Uroporphyrinogen-III synthase (ups1), found in Schizosaccharomyces pombe (strain 972 / ATCC 24843) (Fission yeast).